A 480-amino-acid polypeptide reads, in one-letter code: Glycogen synthase (480 aa).

Lysine 15 provides a ligand contact to ADP-alpha-D-glucose.

This sequence belongs to the glycosyltransferase 1 family. Bacterial/plant glycogen synthase subfamily.

The catalysed reaction is [(1-&gt;4)-alpha-D-glucosyl](n) + ADP-alpha-D-glucose = [(1-&gt;4)-alpha-D-glucosyl](n+1) + ADP + H(+). The protein operates within glycan biosynthesis; glycogen biosynthesis. Functionally, synthesizes alpha-1,4-glucan chains using ADP-glucose. The protein is Glycogen synthase of Rhizobium rhizogenes (strain K84 / ATCC BAA-868) (Agrobacterium radiobacter).